The chain runs to 129 residues: Small ribosomal subunit protein uS11 (129 aa).

Belongs to the universal ribosomal protein uS11 family. In terms of assembly, part of the 30S ribosomal subunit. Interacts with proteins S7 and S18. Binds to IF-3.

Functionally, located on the platform of the 30S subunit, it bridges several disparate RNA helices of the 16S rRNA. Forms part of the Shine-Dalgarno cleft in the 70S ribosome. This is Small ribosomal subunit protein uS11 from Limosilactobacillus reuteri (strain DSM 20016) (Lactobacillus reuteri).